The primary structure comprises 552 residues: DNA ligase (552 aa).

Position 229 (Glu-229) interacts with ATP. Lys-231 (N6-AMP-lysine intermediate) is an active-site residue. Residues Arg-236 and Glu-283 each coordinate ATP. Glu-283 and Glu-377 together coordinate Mg(2+). Residues Lys-382 and Lys-397 each coordinate ATP.

Belongs to the ATP-dependent DNA ligase family. In terms of assembly, interacts with host TOP2A and TOP2B. It depends on Mg(2+) as a cofactor.

The protein localises to the host cytoplasm. It carries out the reaction ATP + (deoxyribonucleotide)n-3'-hydroxyl + 5'-phospho-(deoxyribonucleotide)m = (deoxyribonucleotide)n+m + AMP + diphosphate.. In terms of biological role, DNA ligase that seals nicks in double-stranded DNA during DNA replication, DNA recombination and DNA repair. Recruits cellular topoisomerase II to sites of viral replication and assembly. The protein is DNA ligase (OPG180) of Vaccinia virus (strain Copenhagen) (VACV).